A 1127-amino-acid chain; its full sequence is E3 ubiquitin-protein ligase TRIM33 (1127 aa).

Residues 1–18 (MAENKGGGEAESGGGGSG) show a composition bias toward gly residues. A disordered region spans residues 1-118 (MAENKGGGEA…PSAGPPPGPP (118 aa)). The necessary for E3 ubiquitin-protein ligase activity and repression of SMAD4 signaling and transcriptional repression stretch occupies residues 1–147 (MAENKGGGEA…AEPKLLPCLH (147 aa)). Over residues 19–37 (SAPVTAGAAGPAAQEAEPP) the composition is skewed to low complexity. The segment covering 52-64 (RAGAEGGAAGPDD) has biased composition (gly residues). A compositionally biased stretch (low complexity) spans 65–97 (GGVAAASSGSAQAASSPAASVGTGVAGGAVSTP). A compositionally biased stretch (pro residues) spans 98 to 118 (APAPASAPAPGPSAGPPPGPP). An RING-type zinc finger spans residues 125-154 (CAVCQQSLQSRREAEPKLLPCLHSFCLRCL). 2 consecutive B box-type zinc fingers follow at residues 212–259 (KSEQ…IRKK) and 271–312 (QRPV…YQFL). Residues cysteine 217, cysteine 220, cysteine 241, histidine 245, cysteine 276, histidine 279, cysteine 299, and histidine 304 each coordinate Zn(2+). Residues 299 to 401 (CQLLEHKEHR…QMKLLQQQND (103 aa)) are necessary for oligomerization. Residues 299 to 401 (CQLLEHKEHR…QMKLLQQQND (103 aa)) are a coiled coil. Residues lysine 329, lysine 334, lysine 481, and lysine 504 each participate in a glycyl lysine isopeptide (Lys-Gly) (interchain with G-Cter in SUMO2) cross-link. Arginine 515 is subject to Asymmetric dimethylarginine; alternate. Arginine 515 carries the post-translational modification Omega-N-methylarginine; alternate. Lysine 527 participates in a covalent cross-link: Glycyl lysine isopeptide (Lys-Gly) (interchain with G-Cter in SUMO2). Arginine 535 carries the omega-N-methylarginine modification. A disordered region spans residues 536–563 (MQQPPAPVPTTTTTTQQHPRQAAPQMLQ). Arginine 577 carries the post-translational modification Asymmetric dimethylarginine. At arginine 591 the chain carries Asymmetric dimethylarginine; alternate. An Omega-N-methylarginine; alternate modification is found at arginine 591. 2 positions are modified to asymmetric dimethylarginine: arginine 598 and arginine 604. Disordered regions lie at residues 608-629 (PQYS…HAGP), 673-692 (NPEN…EDAG), and 703-818 (YISG…TPPL). Residues 723–759 (PSALSPGSSGLSNSHTPVRPPSTSSTGSRGSCGSSGR) show a composition bias toward low complexity. N6-acetyllysine; alternate is present on residues lysine 763 and lysine 769. Residues lysine 763 and lysine 769 each participate in a glycyl lysine isopeptide (Lys-Gly) (interchain with G-Cter in SUMO2); alternate cross-link. Lysine 774 is covalently cross-linked (Glycyl lysine isopeptide (Lys-Gly) (interchain with G-Cter in SUMO2)). Residues lysine 776 and lysine 793 each participate in a glycyl lysine isopeptide (Lys-Gly) (interchain with G-Cter in SUMO2); alternate cross-link. Residues lysine 776 and lysine 793 each participate in a glycyl lysine isopeptide (Lys-Gly) (interchain with G-Cter in SUMO1); alternate cross-link. Lysine 793 carries the post-translational modification N6-acetyllysine; alternate. Basic and acidic residues predominate over residues 793–802 (KQEKTEDGRR). A Glycyl lysine isopeptide (Lys-Gly) (interchain with G-Cter in SUMO2) cross-link involves residue lysine 796. Serine 803 is subject to Phosphoserine. Positions 807-818 (LSSPESSLTPPL) are enriched in low complexity. Position 815 is a phosphothreonine (threonine 815). Lysine 861 is covalently cross-linked (Glycyl lysine isopeptide (Lys-Gly) (interchain with G-Cter in SUMO2)). Position 862 is a phosphoserine (serine 862). Residues 887 to 934 (EDWCAVCQNGGDLLCCEKCPKVFHLTCHVPTLLSFPSGDWICTFCRDI) form a PHD-type zinc finger. Lysine 951 carries the N6-acetyllysine modification. Position 953 is an N6-acetyllysine; alternate (lysine 953). Lysine 953 is covalently cross-linked (Glycyl lysine isopeptide (Lys-Gly) (interchain with G-Cter in SUMO2); alternate). A Bromo domain is found at 957 to 1080 (GLSPVDQRKC…LYFEDKLTEI (124 aa)). Glycyl lysine isopeptide (Lys-Gly) (interchain with G-Cter in SUMO2) cross-links involve residues lysine 1007 and lysine 1043. Threonine 1051 is modified (phosphothreonine). Residue lysine 1057 forms a Glycyl lysine isopeptide (Lys-Gly) (interchain with G-Cter in SUMO2) linkage. The tract at residues 1088 to 1127 (PLPEFEQEEDDGEVTEDSDEDFIQPRRKRLKSDERPVHIK) is disordered. The span at 1092–1109 (FEQEEDDGEVTEDSDEDF) shows a compositional bias: acidic residues. Phosphothreonine is present on threonine 1102. Position 1105 is a phosphoserine (serine 1105). Lysine 1118 is covalently cross-linked (Glycyl lysine isopeptide (Lys-Gly) (interchain with G-Cter in SUMO2)). Residues 1118-1127 (KSDERPVHIK) show a composition bias toward basic and acidic residues. Serine 1119 is subject to Phosphoserine.

The protein belongs to the TRIM/RBCC family. In terms of assembly, homooligomer and heterooligomer with TRIM24 and TRIM28 family members. Interacts with SMAD4 in unstimulated cells. Found in a complex with SMAD2 and SMAD3 upon addition of TGF-beta. Interacts with SMAD2 and SMAD3. Interacts with SMAD4 under basal and induced conditions and, upon TGF-beta signaling, with activated SMAD2. Forms a ternary complex with SMAD4 and SMAD2 upon TGF-beta signaling. In terms of processing, sumoylated with SUMO1. In terms of tissue distribution, expressed in stem cells at the bottom of the crypts of the colon (at protein level). Expressed in colon adenomas and adenocarcinomas (at protein level). Expressed in brain, lung, liver, spleen, thymus, prostate, kidney, testis, heart, placenta, pancreas, small intestine, ovary, colon, skeletal muscle and hematopoietic progenitors.

The protein localises to the nucleus. The enzyme catalyses S-ubiquitinyl-[E2 ubiquitin-conjugating enzyme]-L-cysteine + [acceptor protein]-L-lysine = [E2 ubiquitin-conjugating enzyme]-L-cysteine + N(6)-ubiquitinyl-[acceptor protein]-L-lysine.. The protein operates within protein modification; protein ubiquitination. Acts as an E3 ubiquitin-protein ligase. Promotes SMAD4 ubiquitination, nuclear exclusion and degradation via the ubiquitin proteasome pathway. According to PubMed:16751102, does not promote a decrease in the level of endogenous SMAD4. May act as a transcriptional repressor. Inhibits the transcriptional response to TGF-beta/BMP signaling cascade. Plays a role in the control of cell proliferation. Its association with SMAD2 and SMAD3 stimulates erythroid differentiation of hematopoietic stem/progenitor. Monoubiquitinates SMAD4 and acts as an inhibitor of SMAD4-dependent TGF-beta/BMP signaling cascade (Monoubiquitination of SMAD4 hampers its ability to form a stable complex with activated SMAD2/3 resulting in inhibition of TGF-beta/BMP signaling cascade). In Homo sapiens (Human), this protein is E3 ubiquitin-protein ligase TRIM33 (TRIM33).